A 387-amino-acid chain; its full sequence is L-aspartate:5-guanidino-3-methyl-2-oxopentanoate transaminase (387 aa).

Residue lysine 237 is modified to N6-(pyridoxal phosphate)lysine.

This sequence belongs to the class-I pyridoxal-phosphate-dependent aminotransferase family. The cofactor is pyridoxal 5'-phosphate.

It carries out the reaction (3R)-5-guanidino-3-methyl-2-oxopentanoate + L-aspartate = (3R)-3-methyl-L-arginine + oxaloacetate. It functions in the pathway antibiotic biosynthesis. Functionally, aminotransferase involved in the formation of the rare amino acid 3-methylarginine (MeArg), which is used as a potent antibiotic against the closely related soybean pathogen P.syringae pv. glycinea. Probably catalyzes transamination from the donor L-aspartate to 5-guanidino-3-methyl-2-oxopentanoic acid, generating 3-methylarginine. This chain is L-aspartate:5-guanidino-3-methyl-2-oxopentanoate transaminase, found in Pseudomonas syringae pv. syringae.